The primary structure comprises 261 residues: Phosphate import ATP-binding protein PstB 1 (261 aa).

An ABC transporter domain is found at 8–256 (IKVNNLSFYY…PHDSRTREYV (249 aa)). 40 to 47 (GPSGCGKS) lines the ATP pocket.

This sequence belongs to the ABC transporter superfamily. Phosphate importer (TC 3.A.1.7) family. The complex is composed of two ATP-binding proteins (PstB), two transmembrane proteins (PstC and PstA) and a solute-binding protein (PstS).

It is found in the cell inner membrane. The catalysed reaction is phosphate(out) + ATP + H2O = ADP + 2 phosphate(in) + H(+). In terms of biological role, part of the ABC transporter complex PstSACB involved in phosphate import. Responsible for energy coupling to the transport system. The sequence is that of Phosphate import ATP-binding protein PstB 1 from Nostoc sp. (strain PCC 7120 / SAG 25.82 / UTEX 2576).